Reading from the N-terminus, the 458-residue chain is tRNA modification GTPase MnmE (458 aa).

Residues R26, E88, and R127 each coordinate (6S)-5-formyl-5,6,7,8-tetrahydrofolate. The 155-residue stretch at 224–378 folds into the TrmE-type G domain; sequence GLSTAIIGRP…IEERINDIFF (155 aa). N234 lines the K(+) pocket. Residues 234 to 239, 253 to 259, and 278 to 281 each bind GTP; these read NVGKSS, TDIEGTT, and DTAG. S238 serves as a coordination point for Mg(2+). Residues T253, I255, and T258 each contribute to the K(+) site. T259 provides a ligand contact to Mg(2+). K458 lines the (6S)-5-formyl-5,6,7,8-tetrahydrofolate pocket.

This sequence belongs to the TRAFAC class TrmE-Era-EngA-EngB-Septin-like GTPase superfamily. TrmE GTPase family. In terms of assembly, homodimer. Heterotetramer of two MnmE and two MnmG subunits. The cofactor is K(+).

It is found in the cytoplasm. In terms of biological role, exhibits a very high intrinsic GTPase hydrolysis rate. Involved in the addition of a carboxymethylaminomethyl (cmnm) group at the wobble position (U34) of certain tRNAs, forming tRNA-cmnm(5)s(2)U34. The sequence is that of tRNA modification GTPase MnmE from Streptococcus agalactiae serotype III (strain NEM316).